Here is a 949-residue protein sequence, read N- to C-terminus: UvrABC system protein A (949 aa).

42–49 (GLSGSGKS) is an ATP binding site. A C4-type zinc finger spans residues 262–289 (CPVCSYSLPELEPRLFSFNNPMGSCPTC). ABC transporter domains follow at residues 319–596 (WDKR…ENSV) and 616–945 (VNPD…KYLK). An ATP-binding site is contributed by 649–656 (GVSGSGKS). The segment at 748–774 (CEACQGDGVIKVEMHFLPDVYVPCEVC) adopts a C4-type zinc-finger fold.

The protein belongs to the ABC transporter superfamily. UvrA family. Forms a heterotetramer with UvrB during the search for lesions.

The protein localises to the cytoplasm. In terms of biological role, the UvrABC repair system catalyzes the recognition and processing of DNA lesions. UvrA is an ATPase and a DNA-binding protein. A damage recognition complex composed of 2 UvrA and 2 UvrB subunits scans DNA for abnormalities. When the presence of a lesion has been verified by UvrB, the UvrA molecules dissociate. This chain is UvrABC system protein A, found in Neisseria meningitidis serogroup B (strain ATCC BAA-335 / MC58).